The sequence spans 229 residues: Small ribosomal subunit protein uS3 (229 aa).

Residues 17–85 enclose the KH type-2 domain; it reads VKEWIKDEVR…NPQVSVDEVE (69 aa). The tract at residues 202 to 229 is disordered; that stretch reads LRGESGEDEGDKGDEQGGEAQEAEGAGA. Positions 219–229 are enriched in low complexity; it reads GEAQEAEGAGA.

The protein belongs to the universal ribosomal protein uS3 family. In terms of assembly, part of the 30S ribosomal subunit.

In terms of biological role, binds the lower part of the 30S subunit head. This is Small ribosomal subunit protein uS3 from Archaeoglobus fulgidus (strain ATCC 49558 / DSM 4304 / JCM 9628 / NBRC 100126 / VC-16).